The following is a 153-amino-acid chain: Fucose mutarotase (153 aa).

Catalysis depends on His-24, which acts as the Proton donor. Asp-32 is a substrate binding site. Residue Asp-69 is part of the active site. The substrate site is built by Met-79, Tyr-120, Tyr-138, and Asn-140. Tyr-120 is a catalytic residue.

It belongs to the RbsD / FucU family. As to quaternary structure, mainly homodimer, but also exists as homotetramer, homooctamer, and homodecamer. The homodimeric form seems catalytically inactive. As to expression, widely expressed in various tissues and cell lines, including kidney, liver, and pancreas, marginally in muscle and testis.

The catalysed reaction is alpha-L-fucose = beta-L-fucose. It participates in carbohydrate metabolism; L-fucose metabolism. In terms of biological role, involved in the interconversion between alpha- and beta-L-fucoses. L-Fucose (6-deoxy-L-galactose) exists as alpha-L-fucose (29.5%) and beta-L-fucose (70.5%), the beta-form is metabolized through the salvage pathway. GDP-L-fucose formed either by the de novo or salvage pathways is transported into the endoplasmic reticulum, where it serves as a substrate for N- and O-glycosylations by fucosyltransferases. Fucosylated structures expressed on cell surfaces or secreted in biological fluids are believed to play a critical role in cell-cell adhesion and recognition processes. The protein is Fucose mutarotase (Fuom) of Mus musculus (Mouse).